We begin with the raw amino-acid sequence, 67 residues long: Large ribosomal subunit protein uL29 (67 aa).

It belongs to the universal ribosomal protein uL29 family.

The protein is Large ribosomal subunit protein uL29 of Methanosarcina barkeri (strain Fusaro / DSM 804).